The primary structure comprises 320 residues: MARPKIALIGAGQIGGTLAHLVALKELGDVVLFDIADGTPQGKALDIAESGPVERFDASLKGTTDYADIAGADVCIVTAGVPRKPGMSRDDLLGINLKVMKSVGEGIAANAPDAFVICITNPLDAMVWALQQFSGLPKEKVVGMAGVLDSARFRHFLAEEFNVSMKDVTAFVLGGHGDTMVPLTRYSTVAGIPLPDLVEMGWTSQEKLDAIVQRTRDGGAEIVGLLKTGSAFYAPAASAVEMAEAYLKDQKRLLPCAAYCDGEFGLNDMYVGVPTIIGAGGIEKVVDIKLGKDEQAMFDNSVNAVKGLMEACKGIDDSLV.

NAD(+)-binding positions include 10–15 (GAGQIG) and Asp34. The substrate site is built by Arg83 and Arg89. Residues Asn96 and 119-121 (ITN) each bind NAD(+). Substrate-binding residues include Asn121 and Arg152. His176 serves as the catalytic Proton acceptor.

The protein belongs to the LDH/MDH superfamily. MDH type 3 family.

The catalysed reaction is (S)-malate + NAD(+) = oxaloacetate + NADH + H(+). Functionally, catalyzes the reversible oxidation of malate to oxaloacetate. The polypeptide is Malate dehydrogenase (Dinoroseobacter shibae (strain DSM 16493 / NCIMB 14021 / DFL 12)).